Reading from the N-terminus, the 61-residue chain is Large ribosomal subunit protein uL30 (61 aa).

Belongs to the universal ribosomal protein uL30 family. Part of the 50S ribosomal subunit.

The protein is Large ribosomal subunit protein uL30 of Teredinibacter turnerae (strain ATCC 39867 / T7901).